A 229-amino-acid polypeptide reads, in one-letter code: UPF0228 protein MA_3119 (229 aa).

Residues 35 to 66 (STPVNTSTPVNTSTPVNTSTPVNTSTPVSTST) show a composition bias toward low complexity. Positions 35–67 (STPVNTSTPVNTSTPVNTSTPVNTSTPVSTSTI) are disordered.

The protein belongs to the UPF0228 family.

The sequence is that of UPF0228 protein MA_3119 from Methanosarcina acetivorans (strain ATCC 35395 / DSM 2834 / JCM 12185 / C2A).